An 83-amino-acid chain; its full sequence is Large ribosomal subunit protein bL31B (83 aa).

It belongs to the bacterial ribosomal protein bL31 family. Type B subfamily. Part of the 50S ribosomal subunit.

This is Large ribosomal subunit protein bL31B from Lactobacillus johnsonii (strain CNCM I-12250 / La1 / NCC 533).